A 591-amino-acid polypeptide reads, in one-letter code: Chaperone protein DnaK (591 aa).

Threonine 175 carries the phosphothreonine; by autocatalysis modification. Over residues 568-577 (AQAAEFANKQ) the composition is skewed to low complexity. A disordered region spans residues 568-591 (AQAAEFANKQNESDPNNNSSEQNN). The span at 580-591 (SDPNNNSSEQNN) shows a compositional bias: polar residues.

It belongs to the heat shock protein 70 family.

Functionally, acts as a chaperone. The chain is Chaperone protein DnaK from Mycoplasma mycoides subsp. mycoides SC (strain CCUG 32753 / NCTC 10114 / PG1).